A 375-amino-acid polypeptide reads, in one-letter code: N5-carboxyaminoimidazole ribonucleotide synthase (375 aa).

ATP contacts are provided by residues Arg-108, Lys-148, Gly-153–Gln-159, Glu-183–Leu-186, Glu-191, His-214, and Asn-266–Glu-267. The region spanning Lys-112–Thr-296 is the ATP-grasp domain.

Belongs to the PurK/PurT family. As to quaternary structure, homodimer.

The catalysed reaction is 5-amino-1-(5-phospho-beta-D-ribosyl)imidazole + hydrogencarbonate + ATP = 5-carboxyamino-1-(5-phospho-D-ribosyl)imidazole + ADP + phosphate + 2 H(+). The protein operates within purine metabolism; IMP biosynthesis via de novo pathway; 5-amino-1-(5-phospho-D-ribosyl)imidazole-4-carboxylate from 5-amino-1-(5-phospho-D-ribosyl)imidazole (N5-CAIR route): step 1/2. Functionally, catalyzes the ATP-dependent conversion of 5-aminoimidazole ribonucleotide (AIR) and HCO(3)(-) to N5-carboxyaminoimidazole ribonucleotide (N5-CAIR). The chain is N5-carboxyaminoimidazole ribonucleotide synthase from Staphylococcus epidermidis (strain ATCC 35984 / DSM 28319 / BCRC 17069 / CCUG 31568 / BM 3577 / RP62A).